The primary structure comprises 183 residues: Putative 3-methyladenine DNA glycosylase (183 aa).

Belongs to the DNA glycosylase MPG family.

This chain is Putative 3-methyladenine DNA glycosylase, found in Legionella pneumophila subsp. pneumophila (strain Philadelphia 1 / ATCC 33152 / DSM 7513).